The primary structure comprises 69 residues: Photosystem I reaction center subunit IV (69 aa).

This sequence belongs to the PsaE family.

The protein localises to the cellular thylakoid membrane. In terms of biological role, stabilizes the interaction between PsaC and the PSI core, assists the docking of the ferredoxin to PSI and interacts with ferredoxin-NADP oxidoreductase. The polypeptide is Photosystem I reaction center subunit IV (Prochlorococcus marinus (strain MIT 9215)).